An 824-amino-acid polypeptide reads, in one-letter code: Glycerol-3-phosphate acyltransferase (824 aa).

Residues cysteine 302 to methionine 307 carry the HXXXXD motif motif.

This sequence belongs to the GPAT/DAPAT family.

It is found in the cell inner membrane. It catalyses the reaction sn-glycerol 3-phosphate + an acyl-CoA = a 1-acyl-sn-glycero-3-phosphate + CoA. The protein operates within phospholipid metabolism; CDP-diacylglycerol biosynthesis; CDP-diacylglycerol from sn-glycerol 3-phosphate: step 1/3. The sequence is that of Glycerol-3-phosphate acyltransferase from Actinobacillus pleuropneumoniae serotype 3 (strain JL03).